The sequence spans 292 residues: 4-hydroxy-tetrahydrodipicolinate synthase (292 aa).

Residue T45 coordinates pyruvate. Y133 acts as the Proton donor/acceptor in catalysis. The active-site Schiff-base intermediate with substrate is the K161. I203 is a binding site for pyruvate.

This sequence belongs to the DapA family. Homotetramer; dimer of dimers.

Its subcellular location is the cytoplasm. The enzyme catalyses L-aspartate 4-semialdehyde + pyruvate = (2S,4S)-4-hydroxy-2,3,4,5-tetrahydrodipicolinate + H2O + H(+). It participates in amino-acid biosynthesis; L-lysine biosynthesis via DAP pathway; (S)-tetrahydrodipicolinate from L-aspartate: step 3/4. Functionally, catalyzes the condensation of (S)-aspartate-beta-semialdehyde [(S)-ASA] and pyruvate to 4-hydroxy-tetrahydrodipicolinate (HTPA). This chain is 4-hydroxy-tetrahydrodipicolinate synthase, found in Dechloromonas aromatica (strain RCB).